The primary structure comprises 349 residues: GDP-mannose:glycolipid 4-beta-D-mannosyltransferase (349 aa).

The signal sequence occupies residues 1-14 (MSASASLPVTRAAA).

Belongs to the glycosyltransferase 94 family.

It is found in the cell inner membrane. The catalysed reaction is beta-D-GlcA-(1-&gt;2)-alpha-D-Man-(1-&gt;3)-beta-D-Glc-(1-&gt;4)-alpha-D-Glc-di-trans,octa-cis-undecaprenyl diphosphate + GDP-alpha-D-mannose = beta-D-Man-(1-&gt;4)-beta-D-GlcA-(1-&gt;2)-alpha-D-Man-(1-&gt;3)-beta-D-Glc-(1-&gt;4)-alpha-D-Glc-di-trans,octa-cis-undecaprenyl diphosphate + GDP + H(+). Its pathway is glycan biosynthesis; xanthan biosynthesis. Its function is as follows. Nonprocessive beta-mannosyltransferase that catalyzes the transfer of a mannose residue from GDP-mannose to glucuronic acid-beta-1,2-mannose-alpha-1,3-glucose-beta-1,4-glucose-PP-polyisoprenyl to form the lipid-linked pentasaccharide repeating unit of xanthan, Man-GlcA-Man-Glc(2)-PP-Pol. Is involved in the biosynthesis of the exopolysaccharide xanthan. To a lesser extent, can also use ADP-Man and even GDP-Glc as sugar donor substrates in vitro. Is unable to transfer a Man residue to the free-tetrasaccharide GlcA-Man-Glc(2) used as an acceptor, which indicates that the diphosphate group and the lipid moiety in the acceptor substrate are of major importance for acceptor binding and catalysis. This chain is GDP-mannose:glycolipid 4-beta-D-mannosyltransferase (gumI), found in Xanthomonas campestris pv. campestris.